The primary structure comprises 305 residues: tRNA uridine(34) hydroxylase (305 aa).

Positions 136 to 230 constitute a Rhodanese domain; it reads ADENTVVVDK…YLEEVPREQS (95 aa). The active-site Cysteine persulfide intermediate is the Cys190.

It belongs to the TrhO family.

The catalysed reaction is uridine(34) in tRNA + AH2 + O2 = 5-hydroxyuridine(34) in tRNA + A + H2O. Functionally, catalyzes oxygen-dependent 5-hydroxyuridine (ho5U) modification at position 34 in tRNAs. This Brucella melitensis biotype 1 (strain ATCC 23456 / CCUG 17765 / NCTC 10094 / 16M) protein is tRNA uridine(34) hydroxylase.